A 1620-amino-acid chain; its full sequence is ABC-type organic anion transporter ABCA8A (1620 aa).

Helical transmembrane passes span Thr30–Leu50, Cys224–Val244, Ser263–Leu283, Val294–Ile314, Phe328–Ala348, Leu357–Leu377, and Ile397–Phe417. 2 N-linked (GlcNAc...) asparagine glycosylation sites follow: Asn454 and Asn482. One can recognise an ABC transporter 1 domain in the interval Ile478–Gln713. Gly514 to Ser521 contributes to the ATP binding site. The chain crosses the membrane as a helical span at residues Ile861 to Tyr881. An N-linked (GlcNAc...) asparagine glycan is attached at Asn967. The next 7 helical transmembrane spans lie at Cys979–Ala999, Tyr1019–Met1039, Ala1068–Ala1088, Ile1105–Ile1125, Ser1133–Ile1153, Ile1159–Leu1179, and Glu1196–Leu1216. Residues Leu1284–Lys1517 enclose the ABC transporter 2 domain. Gly1322 to Ser1329 is an ATP binding site.

This sequence belongs to the ABC transporter superfamily. ABCA family. Expressed in lung, heart, liver, skeletal muscle and testis. Highly expressed in the liver, and is also abundant in heart and skeletal muscle. Highly expressed in heart.

It localises to the cell membrane. The protein localises to the basolateral cell membrane. It carries out the reaction taurocholate(in) + ATP + H2O = taurocholate(out) + ADP + phosphate + H(+). It catalyses the reaction cholesterol(in) + ATP + H2O = cholesterol(out) + ADP + phosphate + H(+). Its activity is regulated as follows. Cholesterol efflux is increased by extracellularly applied taurocholate. Mediates cholesterol and taurocholate efflux. Through the interaction with ABCA1 potentiates the cholesterol efflux to lipid-free APOA1, in turn regulates high-density lipoprotein cholesterol levels. This is ABC-type organic anion transporter ABCA8A from Mus musculus (Mouse).